The primary structure comprises 214 residues: Rac-like GTP-binding protein 2 (214 aa).

14–21 (GDGAVGKT) contributes to the GTP binding site. The Effector region motif lies at 36–44 (YIPTVFDNF). GTP is bound by residues 61 to 65 (DTAGQ) and 119 to 122 (TKLD).

It belongs to the small GTPase superfamily. Rho family. May be palmitoylated.

The protein resides in the cytoplasm. Its subcellular location is the membrane. Its function is as follows. Inactive GDP-bound Rho GTPases reside in the cytosol, are found in a complex with Rho GDP-dissociation inhibitors (Rho GDIs), and are released from the GDI protein in order to translocate to membranes upon activation. The chain is Rac-like GTP-binding protein 2 (RAC2) from Oryza sativa subsp. japonica (Rice).